The following is a 405-amino-acid chain: Coenzyme F420 hydrogenase subunit alpha (405 aa).

Residues Cys-63, Cys-66, Cys-380, and Cys-383 each contribute to the Ni(2+) site.

This sequence belongs to the [NiFe]/[NiFeSe] hydrogenase large subunit family. As to quaternary structure, heterocomplex of the form (alpha(1)beta(1)gamma(1))(8). The cofactor is Ni(2+). Iron-sulfur cluster is required as a cofactor. FAD serves as cofactor.

The catalysed reaction is oxidized coenzyme F420-(gamma-L-Glu)(n) + H2 + H(+) = reduced coenzyme F420-(gamma-L-Glu)(n). Its function is as follows. Reduces the physiological low-potential two-electron acceptor coenzyme F420, and the artificial one-electron acceptor methylviologen. This is Coenzyme F420 hydrogenase subunit alpha (frhA) from Methanothermobacter thermautotrophicus (strain ATCC 29096 / DSM 1053 / JCM 10044 / NBRC 100330 / Delta H) (Methanobacterium thermoautotrophicum).